Here is a 355-residue protein sequence, read N- to C-terminus: Peptide chain release factor 1 (355 aa).

Gln-230 is modified (N5-methylglutamine).

Belongs to the prokaryotic/mitochondrial release factor family. In terms of processing, methylated by PrmC. Methylation increases the termination efficiency of RF1.

It localises to the cytoplasm. Its function is as follows. Peptide chain release factor 1 directs the termination of translation in response to the peptide chain termination codons UAG and UAA. This chain is Peptide chain release factor 1, found in Geobacter sulfurreducens (strain ATCC 51573 / DSM 12127 / PCA).